A 400-amino-acid polypeptide reads, in one-letter code: Probable protein phosphatase 2C 64 (400 aa).

In terms of domain architecture, PPM-type phosphatase spans 47–355 (DFSMAVVQAN…DDITVIVVFF (309 aa)). S75 is subject to Phosphoserine. Residues D86, G87, D287, and D346 each contribute to the Mn(2+) site.

It belongs to the PP2C family. Interacts with SAUR19. It depends on Mg(2+) as a cofactor. Mn(2+) is required as a cofactor.

The enzyme catalyses O-phospho-L-seryl-[protein] + H2O = L-seryl-[protein] + phosphate. It catalyses the reaction O-phospho-L-threonyl-[protein] + H2O = L-threonyl-[protein] + phosphate. Functionally, dephosphorylates and represses plasma membrane H(+)-ATPases (PM H(+)-ATPases, e.g. AHA1 and AHA2), thus influencing negatively plant growth and fitness. This chain is Probable protein phosphatase 2C 64, found in Arabidopsis thaliana (Mouse-ear cress).